The following is a 60-amino-acid chain: Large ribosomal subunit protein bL33 (60 aa).

This sequence belongs to the bacterial ribosomal protein bL33 family.

In Chlorobium luteolum (strain DSM 273 / BCRC 81028 / 2530) (Pelodictyon luteolum), this protein is Large ribosomal subunit protein bL33.